Here is a 152-residue protein sequence, read N- to C-terminus: Ribosome maturation factor RimP (152 aa).

The protein belongs to the RimP family.

The protein localises to the cytoplasm. Functionally, required for maturation of 30S ribosomal subunits. This Serratia proteamaculans (strain 568) protein is Ribosome maturation factor RimP.